We begin with the raw amino-acid sequence, 216 residues long: UPF0502 protein PFL_4004 (216 aa).

This sequence belongs to the UPF0502 family.

The protein is UPF0502 protein PFL_4004 of Pseudomonas fluorescens (strain ATCC BAA-477 / NRRL B-23932 / Pf-5).